The chain runs to 487 residues: ATP synthase subunit beta (487 aa).

164–171 contacts ATP; sequence GGAGVGKT.

This sequence belongs to the ATPase alpha/beta chains family. F-type ATPases have 2 components, CF(1) - the catalytic core - and CF(0) - the membrane proton channel. CF(1) has five subunits: alpha(3), beta(3), gamma(1), delta(1), epsilon(1). CF(0) has four main subunits: a(1), b(1), b'(1) and c(9-12).

The protein localises to the cellular thylakoid membrane. It carries out the reaction ATP + H2O + 4 H(+)(in) = ADP + phosphate + 5 H(+)(out). Functionally, produces ATP from ADP in the presence of a proton gradient across the membrane. The catalytic sites are hosted primarily by the beta subunits. This Synechococcus sp. (strain CC9605) protein is ATP synthase subunit beta.